Consider the following 132-residue polypeptide: Pro-MCH 2 (132 aa).

The signal sequence occupies residues methionine 1–alanine 24. An intrachain disulfide couples cysteine 120 to cysteine 129.

Belongs to the melanin-concentrating hormone family. In terms of tissue distribution, pituitary gland. Produced in neurons of lateral basal hypothalamus which project both to the brain and to the neural lobe of the pituitary gland from where MCH is released.

In terms of biological role, plays a role in skin pigmentation by antagonizing the action of melanotropin alpha. Induces melanin concentration within the melanophores. May participate in the control of the hypothalamo-pituitary adrenal gland axis by inhibiting the release of ACTH. This is Pro-MCH 2 (mch2) from Oncorhynchus keta (Chum salmon).